Consider the following 92-residue polypeptide: Small ribosomal subunit protein uS19 (92 aa).

Belongs to the universal ribosomal protein uS19 family.

In terms of biological role, protein S19 forms a complex with S13 that binds strongly to the 16S ribosomal RNA. This is Small ribosomal subunit protein uS19 from Rhodopseudomonas palustris (strain BisA53).